The sequence spans 804 residues: Leucine--tRNA ligase (804 aa).

The 'HIGH' region signature appears at 39–50 (PFPSGKGLHVGH). Residues 573-577 (KMSKS) carry the 'KMSKS' region motif. Lysine 576 contacts ATP.

The protein belongs to the class-I aminoacyl-tRNA synthetase family.

It is found in the cytoplasm. It carries out the reaction tRNA(Leu) + L-leucine + ATP = L-leucyl-tRNA(Leu) + AMP + diphosphate. This Lactobacillus gasseri (strain ATCC 33323 / DSM 20243 / BCRC 14619 / CIP 102991 / JCM 1131 / KCTC 3163 / NCIMB 11718 / NCTC 13722 / AM63) protein is Leucine--tRNA ligase.